A 329-amino-acid chain; its full sequence is Acetyl-coenzyme A carboxylase carboxyl transferase subunit alpha (329 aa).

The region spanning 40 to 294 (QLETLAARRR…REALERNLSE (255 aa)) is the CoA carboxyltransferase C-terminal domain.

It belongs to the AccA family. In terms of assembly, acetyl-CoA carboxylase is a heterohexamer composed of biotin carboxyl carrier protein (AccB), biotin carboxylase (AccC) and two subunits each of ACCase subunit alpha (AccA) and ACCase subunit beta (AccD).

The protein resides in the cytoplasm. It catalyses the reaction N(6)-carboxybiotinyl-L-lysyl-[protein] + acetyl-CoA = N(6)-biotinyl-L-lysyl-[protein] + malonyl-CoA. It participates in lipid metabolism; malonyl-CoA biosynthesis; malonyl-CoA from acetyl-CoA: step 1/1. Functionally, component of the acetyl coenzyme A carboxylase (ACC) complex. First, biotin carboxylase catalyzes the carboxylation of biotin on its carrier protein (BCCP) and then the CO(2) group is transferred by the carboxyltransferase to acetyl-CoA to form malonyl-CoA. This chain is Acetyl-coenzyme A carboxylase carboxyl transferase subunit alpha, found in Synechococcus sp. (strain CC9311).